An 89-amino-acid polypeptide reads, in one-letter code: Small ribosomal subunit protein uS15 (89 aa).

Residues 1-11 (MSIAAERKAEV) show a composition bias toward basic and acidic residues. The tract at residues 1 to 24 (MSIAAERKAEVIKTNATKAGDTGS) is disordered.

The protein belongs to the universal ribosomal protein uS15 family. As to quaternary structure, part of the 30S ribosomal subunit. Forms a bridge to the 50S subunit in the 70S ribosome, contacting the 23S rRNA.

One of the primary rRNA binding proteins, it binds directly to 16S rRNA where it helps nucleate assembly of the platform of the 30S subunit by binding and bridging several RNA helices of the 16S rRNA. In terms of biological role, forms an intersubunit bridge (bridge B4) with the 23S rRNA of the 50S subunit in the ribosome. The polypeptide is Small ribosomal subunit protein uS15 (Bradyrhizobium diazoefficiens (strain JCM 10833 / BCRC 13528 / IAM 13628 / NBRC 14792 / USDA 110)).